We begin with the raw amino-acid sequence, 412 residues long: Probable ribonuclease FAU-1 (412 aa).

The protein belongs to the FAU-1 family.

Probable RNase involved in rRNA stability through maturation and/or degradation of precursor rRNAs. Binds to RNA in loop regions with AU-rich sequences. The protein is Probable ribonuclease FAU-1 of Sulfurisphaera tokodaii (strain DSM 16993 / JCM 10545 / NBRC 100140 / 7) (Sulfolobus tokodaii).